Reading from the N-terminus, the 321-residue chain is Transmembrane protein fend (321 aa).

The first 18 residues, M1–A18, serve as a signal peptide directing secretion. The Extracellular segment spans residues Q19 to G261. Residues V262–F282 traverse the membrane as a helical segment. Topologically, residues L283–V321 are cytoplasmic.

The protein localises to the membrane. Involved in the normal targeting of ventral muscle, muscle 12, by motoneurons. May function as an axon guidance molecule involved in neuromuscular specificity. In Drosophila melanogaster (Fruit fly), this protein is Transmembrane protein fend (fend).